The following is a 94-amino-acid chain: Large ribosomal subunit protein bL27 (94 aa).

A propeptide spanning residues 1–9 is cleaved from the precursor; that stretch reads MLELNLQLF. Residues 12 to 33 form a disordered region; the sequence is KKGGGSTSNGRDSQAKRLGAKA.

This sequence belongs to the bacterial ribosomal protein bL27 family. The N-terminus is cleaved by ribosomal processing cysteine protease Prp.

The polypeptide is Large ribosomal subunit protein bL27 (Lactococcus lactis subsp. lactis (strain IL1403) (Streptococcus lactis)).